Consider the following 100-residue polypeptide: Urease subunit gamma (100 aa).

Belongs to the urease gamma subunit family. As to quaternary structure, heterotrimer of UreA (gamma), UreB (beta) and UreC (alpha) subunits. Three heterotrimers associate to form the active enzyme.

Its subcellular location is the cytoplasm. The enzyme catalyses urea + 2 H2O + H(+) = hydrogencarbonate + 2 NH4(+). The protein operates within nitrogen metabolism; urea degradation; CO(2) and NH(3) from urea (urease route): step 1/1. This chain is Urease subunit gamma, found in Proteus hauseri.